Reading from the N-terminus, the 145-residue chain is Large ribosomal subunit protein uL11 (145 aa).

The protein belongs to the universal ribosomal protein uL11 family. In terms of assembly, part of the ribosomal stalk of the 50S ribosomal subunit. Interacts with L10 and the large rRNA to form the base of the stalk. L10 forms an elongated spine to which L12 dimers bind in a sequential fashion forming a multimeric L10(L12)X complex. In terms of processing, one or more lysine residues are methylated.

In terms of biological role, forms part of the ribosomal stalk which helps the ribosome interact with GTP-bound translation factors. This chain is Large ribosomal subunit protein uL11, found in Rickettsia canadensis (strain McKiel).